The primary structure comprises 421 residues: UDP-N-acetylglucosamine 1-carboxyvinyltransferase (421 aa).

22–23 lines the phosphoenolpyruvate pocket; the sequence is KN. Arg93 serves as a coordination point for UDP-N-acetyl-alpha-D-glucosamine. Residue Cys117 is the Proton donor of the active site. Cys117 is subject to 2-(S-cysteinyl)pyruvic acid O-phosphothioketal. Residues 122–126, Asp308, and Val330 each bind UDP-N-acetyl-alpha-D-glucosamine; that span reads RPVDL.

Belongs to the EPSP synthase family. MurA subfamily.

Its subcellular location is the cytoplasm. It carries out the reaction phosphoenolpyruvate + UDP-N-acetyl-alpha-D-glucosamine = UDP-N-acetyl-3-O-(1-carboxyvinyl)-alpha-D-glucosamine + phosphate. Its pathway is cell wall biogenesis; peptidoglycan biosynthesis. Cell wall formation. Adds enolpyruvyl to UDP-N-acetylglucosamine. This chain is UDP-N-acetylglucosamine 1-carboxyvinyltransferase, found in Azotobacter vinelandii (strain DJ / ATCC BAA-1303).